The chain runs to 269 residues: Tryptophan synthase alpha chain (269 aa).

Active-site proton acceptor residues include Glu49 and Asp60.

The protein belongs to the TrpA family. As to quaternary structure, tetramer of two alpha and two beta chains.

The catalysed reaction is (1S,2R)-1-C-(indol-3-yl)glycerol 3-phosphate + L-serine = D-glyceraldehyde 3-phosphate + L-tryptophan + H2O. The protein operates within amino-acid biosynthesis; L-tryptophan biosynthesis; L-tryptophan from chorismate: step 5/5. In terms of biological role, the alpha subunit is responsible for the aldol cleavage of indoleglycerol phosphate to indole and glyceraldehyde 3-phosphate. The protein is Tryptophan synthase alpha chain of Pseudomonas putida (strain ATCC 47054 / DSM 6125 / CFBP 8728 / NCIMB 11950 / KT2440).